Consider the following 318-residue polypeptide: Elongation factor Ts, mitochondrial (318 aa).

The transit peptide at 1–18 (MLLQRFFTRALHSTRQLY) directs the protein to the mitochondrion.

Belongs to the EF-Ts family.

Its subcellular location is the mitochondrion. Functionally, associates with the EF-Tu.GDP complex and induces the exchange of GDP to GTP. It remains bound to the aminoacyl-tRNA.EF-Tu.GTP complex up to the GTP hydrolysis stage on the ribosome. The chain is Elongation factor Ts, mitochondrial from Drosophila melanogaster (Fruit fly).